The following is a 344-amino-acid chain: Protein pelota homolog (344 aa).

This sequence belongs to the eukaryotic release factor 1 family. Pelota subfamily. Monomer. It depends on a divalent metal cation as a cofactor.

The protein localises to the cytoplasm. May function in recognizing stalled ribosomes, interact with stem-loop structures in stalled mRNA molecules, and effect endonucleolytic cleavage of the mRNA. May play a role in the release non-functional ribosomes and degradation of damaged mRNAs. Has endoribonuclease activity. This chain is Protein pelota homolog, found in Saccharolobus islandicus (strain M.16.27) (Sulfolobus islandicus).